A 316-amino-acid chain; its full sequence is Pantothenate kinase (316 aa).

95 to 102 (GSVAVGKS) is an ATP binding site.

It belongs to the prokaryotic pantothenate kinase family.

The protein localises to the cytoplasm. The enzyme catalyses (R)-pantothenate + ATP = (R)-4'-phosphopantothenate + ADP + H(+). It functions in the pathway cofactor biosynthesis; coenzyme A biosynthesis; CoA from (R)-pantothenate: step 1/5. The protein is Pantothenate kinase of Shigella boydii serotype 18 (strain CDC 3083-94 / BS512).